The following is a 223-amino-acid chain: Glutathione S-transferase Z2 (223 aa).

Residues 10-91 (AKLKLYSYWR…YLDDKYPEPP (82 aa)) form the GST N-terminal domain. Residues 20 to 21 (SS), 20 to 25 (SSCAHR), Q49, 49 to 50 (QS), 62 to 63 (TV), V63, 75 to 76 (DS), Q115, and 119 to 121 (NMA) contribute to the glutathione site. In terms of domain architecture, GST C-terminal spans 96–221 (DYHKRAVNYQ…VPEKQPDTPS (126 aa)).

The protein belongs to the GST superfamily. Zeta family.

It is found in the cytoplasm. It localises to the cytosol. The enzyme catalyses RX + glutathione = an S-substituted glutathione + a halide anion + H(+). Functionally, may be involved in the conjugation of reduced glutathione to a wide number of exogenous and endogenous hydrophobic electrophiles and have a detoxification role against certain herbicides. The sequence is that of Glutathione S-transferase Z2 (GSTZ2) from Arabidopsis thaliana (Mouse-ear cress).